The chain runs to 453 residues: Zinc finger and BTB domain-containing protein 44 (453 aa).

Lys4 is covalently cross-linked (Glycyl lysine isopeptide (Lys-Gly) (interchain with G-Cter in SUMO2)). A BTB domain is found at 31-98; that stretch reads CDITIRVQDR…AYTATLSINT (68 aa). Ser135, Ser159, Ser161, Ser165, Ser191, Ser194, and Ser199 each carry phosphoserine. Residue Thr200 is modified to Phosphothreonine. Positions 241 to 265 are disordered; that stretch reads QPEKAKQAENTRTLELPGPSEAGRR. Lys290 participates in a covalent cross-link: Glycyl lysine isopeptide (Lys-Gly) (interchain with G-Cter in SUMO2). Disordered stretches follow at residues 295 to 324 and 336 to 368; these read SDEEVHEEVSQPVSASQSSLSDQQTVPGSE and SSSIGSVDEGVTEGLPTLQSTSSTNAHADEDDR. Low complexity predominate over residues 304–318; sequence SQPVSASQSSLSDQQ. The segment covering 352–361 has biased composition (polar residues); it reads TLQSTSSTNA. 2 C2H2-type zinc fingers span residues 399–421 and 427–449; these read FQCPTCGVRFTRIQNLKQHMLIH and FQCDCCGKKFTRAYSLKMHRLKH.

The protein resides in the nucleus. This is Zinc finger and BTB domain-containing protein 44 (Zbtb44) from Rattus norvegicus (Rat).